The sequence spans 135 residues: Thyrostimulin beta-5 subunit (135 aa).

The N-terminal stretch at methionine 1 to alanine 19 is a signal peptide. 5 disulfides stabilise this stretch: cysteine 30-cysteine 87, cysteine 54-cysteine 102, cysteine 63-cysteine 118, cysteine 67-cysteine 120, and cysteine 123-cysteine 130.

This sequence belongs to the glycoprotein hormones subunit beta family. Heterodimer with GPHA2; non-covalently-linked. As to expression, expressed by the venom duct.

Its subcellular location is the secreted. The chain is Thyrostimulin beta-5 subunit from Conus victoriae (Queen Victoria cone).